The following is a 179-amino-acid chain: Large ribosomal subunit protein uL5 (179 aa).

The protein belongs to the universal ribosomal protein uL5 family. Part of the 50S ribosomal subunit; part of the 5S rRNA/L5/L18/L25 subcomplex. Contacts the 5S rRNA and the P site tRNA. Forms a bridge to the 30S subunit in the 70S ribosome.

Functionally, this is one of the proteins that bind and probably mediate the attachment of the 5S RNA into the large ribosomal subunit, where it forms part of the central protuberance. In the 70S ribosome it contacts protein S13 of the 30S subunit (bridge B1b), connecting the 2 subunits; this bridge is implicated in subunit movement. Contacts the P site tRNA; the 5S rRNA and some of its associated proteins might help stabilize positioning of ribosome-bound tRNAs. The polypeptide is Large ribosomal subunit protein uL5 (Rickettsia rickettsii (strain Iowa)).